A 347-amino-acid chain; its full sequence is MTEKTDLKNLTLPALEQFLRGQGKERFRATQVFKWIYQHDARSFQEMTNISKDLRAELEAKAYISNLEPEAVEVGGDGTRKYLFGLEDGNSVESVLIPDEGRNTLCISSQVGCAMGCAFCLTGTFRLTRNLTTAEIVNQIMAVRRDVEIRNIVMMGMGEPLHNLDNVIPAIHIMIDGNGLQLSNRRVTVSTCGLAPEMERLGRELPNVNLAVSLNATTDELRDRIMPINRRYPLKELLSACREFPLPGRRKVTFEYVMLGGLNDTLEDAKRLLRLTSDIPNKVNLIPFNEFQGCEFRSPTRAAIDAFHKYLIDRHVTVITRDSRGSDISAACGQLKGKLDAARQPTE.

Catalysis depends on glutamate 93, which acts as the Proton acceptor. The Radical SAM core domain maps to 99–327 (DEGRNTLCIS…VITRDSRGSD (229 aa)). A disulfide bond links cysteine 106 and cysteine 332. Positions 113, 117, and 120 each coordinate [4Fe-4S] cluster. S-adenosyl-L-methionine-binding positions include 158–159 (GE), serine 190, 213–215 (SLN), and asparagine 289. The active-site S-methylcysteine intermediate is cysteine 332.

The protein belongs to the radical SAM superfamily. RlmN family. [4Fe-4S] cluster serves as cofactor.

Its subcellular location is the cytoplasm. It carries out the reaction adenosine(2503) in 23S rRNA + 2 reduced [2Fe-2S]-[ferredoxin] + 2 S-adenosyl-L-methionine = 2-methyladenosine(2503) in 23S rRNA + 5'-deoxyadenosine + L-methionine + 2 oxidized [2Fe-2S]-[ferredoxin] + S-adenosyl-L-homocysteine. It catalyses the reaction adenosine(37) in tRNA + 2 reduced [2Fe-2S]-[ferredoxin] + 2 S-adenosyl-L-methionine = 2-methyladenosine(37) in tRNA + 5'-deoxyadenosine + L-methionine + 2 oxidized [2Fe-2S]-[ferredoxin] + S-adenosyl-L-homocysteine. Functionally, specifically methylates position 2 of adenine 2503 in 23S rRNA and position 2 of adenine 37 in tRNAs. m2A2503 modification seems to play a crucial role in the proofreading step occurring at the peptidyl transferase center and thus would serve to optimize ribosomal fidelity. In Pelobacter propionicus (strain DSM 2379 / NBRC 103807 / OttBd1), this protein is Dual-specificity RNA methyltransferase RlmN.